The chain runs to 993 residues: Protein translocase subunit SecA (993 aa).

ATP-binding positions include Gln-102, 120-124, and Asp-523; that span reads GEGKT. The tract at residues 910–962 is disordered; that stretch reads ENAPEPQISGGNGQQPPQRRQQTSLDDLEKQFERKKKRELEQARMAGGGMPDA. Basic and acidic residues predominate over residues 936–951; it reads DLEKQFERKKKRELEQ. The Zn(2+) site is built by Cys-979, Cys-981, Cys-990, and His-991.

It belongs to the SecA family. In terms of assembly, monomer and homodimer. Part of the essential Sec protein translocation apparatus which comprises SecA, SecYEG and auxiliary proteins SecDF. Other proteins may also be involved. Zn(2+) serves as cofactor.

The protein resides in the cell inner membrane. It is found in the cytoplasm. The catalysed reaction is ATP + H2O + cellular proteinSide 1 = ADP + phosphate + cellular proteinSide 2.. In terms of biological role, part of the Sec protein translocase complex. Interacts with the SecYEG preprotein conducting channel. Has a central role in coupling the hydrolysis of ATP to the transfer of proteins into and across the cell membrane, serving as an ATP-driven molecular motor driving the stepwise translocation of polypeptide chains across the membrane. This chain is Protein translocase subunit SecA, found in Koribacter versatilis (strain Ellin345).